The following is a 273-amino-acid chain: Type III pantothenate kinase (273 aa).

ATP is bound at residue Asp7–Lys14. Residues Phe119 and Gly124–Arg127 contribute to the substrate site. Residue Asp126 is the Proton acceptor of the active site. Asp146 contacts K(+). Thr149 lines the ATP pocket. Thr206 contributes to the substrate binding site.

It belongs to the type III pantothenate kinase family. As to quaternary structure, homodimer. NH4(+) is required as a cofactor. It depends on K(+) as a cofactor.

The protein resides in the cytoplasm. It catalyses the reaction (R)-pantothenate + ATP = (R)-4'-phosphopantothenate + ADP + H(+). It functions in the pathway cofactor biosynthesis; coenzyme A biosynthesis; CoA from (R)-pantothenate: step 1/5. In terms of biological role, catalyzes the phosphorylation of pantothenate (Pan), the first step in CoA biosynthesis. This Rhodopirellula baltica (strain DSM 10527 / NCIMB 13988 / SH1) protein is Type III pantothenate kinase.